Consider the following 555-residue polypeptide: MAEKDKYRPLANFPSTAWGCSFASFSSSNSDFELYTREVETLKEKVRPMVTASTKDPLENVQIINLLYRLGVSYHFENEITDQLNHIFEIIPNHIISDDNDYDLYTVAILFQILRQYGHKVPCDVFNKFKNSDGKFKKSIANDLKGLLSLYEASFLSVHGENILDEAIAFTRPLLESFADQSSPHLAKYIRNSLLRPHHQGIQRVEARQYISFYEEDESRNETLLKFAKLDFNRLQLLHKQELASLSRYKKYIAQIIIWEDLNLAKELPYIRDRLVETYLWAIGAHFEPQYALSRAIIAKYTTIVSAVDDTYDAYGTLDELQRFTNAFQRCDIDAIDELPDYMKVLYRALLNFFDQIEDEVDEGRSYSTSVAKEAFKELVRSYYVEAQWFSDGYVPSFDEYMRNGLITSTYTVLPAASFIGMENTVGEKEYKWVQSNPKIVKAAKIICRLMDDITTHEDEQKRGHCASSIECYMKEYGVSEKKAIEEIQKICANAWKDMNEECMKKPPTVSRTLLKYYVNLARVIDFVYKNLDSYTYASSLKGDITTVFLELLPV.

Residues Asp309, Asp313, and Glu460 each contribute to the Mg(2+) site. The DDXXD motif motif lies at 309–313 (DDTYD).

The protein belongs to the terpene synthase family. It depends on Mg(2+) as a cofactor.

Its function is as follows. Probable sesquiterpene synthase. This Ricinus communis (Castor bean) protein is Probable terpene synthase 6 (TPS6).